A 364-amino-acid chain; its full sequence is Ferrochelatase (364 aa).

The Fe cation site is built by H211 and E292.

It belongs to the ferrochelatase family.

The protein localises to the cytoplasm. The enzyme catalyses heme b + 2 H(+) = protoporphyrin IX + Fe(2+). The protein operates within porphyrin-containing compound metabolism; protoheme biosynthesis; protoheme from protoporphyrin-IX: step 1/1. Functionally, catalyzes the ferrous insertion into protoporphyrin IX. The polypeptide is Ferrochelatase (Nitrosomonas europaea (strain ATCC 19718 / CIP 103999 / KCTC 2705 / NBRC 14298)).